The following is a 78-amino-acid chain: Acyl carrier protein (78 aa).

The Carrier domain occupies 2–77 (SSIEERVKKI…LAIDYINANL (76 aa)). Position 37 is an O-(pantetheine 4'-phosphoryl)serine (S37).

Belongs to the acyl carrier protein (ACP) family. 4'-phosphopantetheine is transferred from CoA to a specific serine of apo-ACP by AcpS. This modification is essential for activity because fatty acids are bound in thioester linkage to the sulfhydryl of the prosthetic group.

It localises to the cytoplasm. The protein operates within lipid metabolism; fatty acid biosynthesis. In terms of biological role, carrier of the growing fatty acid chain in fatty acid biosynthesis. This is Acyl carrier protein from Cellvibrio japonicus (strain Ueda107) (Pseudomonas fluorescens subsp. cellulosa).